Here is a 197-residue protein sequence, read N- to C-terminus: Cytochrome c-L (197 aa).

The first 25 residues, Met-1–Ala-25, serve as a signal peptide directing secretion. Heme c-binding residues include Cys-90, Cys-93, and His-94.

In terms of processing, binds 1 heme c group covalently per subunit.

It localises to the periplasm. In terms of biological role, electron acceptor for MDH. Acts in methanol oxidation. The protein is Cytochrome c-L (moxG) of Methylorubrum extorquens (strain ATCC 14718 / DSM 1338 / JCM 2805 / NCIMB 9133 / AM1) (Methylobacterium extorquens).